The following is a 39-amino-acid chain: Photosystem II reaction center protein J (39 aa).

Residues 7 to 27 traverse the membrane as a helical segment; it reads IPLWIVATVAGTGALVVVGLF.

It belongs to the PsbJ family. As to quaternary structure, PSII is composed of 1 copy each of membrane proteins PsbA, PsbB, PsbC, PsbD, PsbE, PsbF, PsbH, PsbI, PsbJ, PsbK, PsbL, PsbM, PsbT, PsbX, PsbY, PsbZ, Psb30/Ycf12, peripheral proteins PsbO, CyanoQ (PsbQ), PsbU, PsbV and a large number of cofactors. It forms dimeric complexes.

Its subcellular location is the cellular thylakoid membrane. Functionally, one of the components of the core complex of photosystem II (PSII). PSII is a light-driven water:plastoquinone oxidoreductase that uses light energy to abstract electrons from H(2)O, generating O(2) and a proton gradient subsequently used for ATP formation. It consists of a core antenna complex that captures photons, and an electron transfer chain that converts photonic excitation into a charge separation. This Synechococcus sp. (strain ATCC 27144 / PCC 6301 / SAUG 1402/1) (Anacystis nidulans) protein is Photosystem II reaction center protein J.